A 585-amino-acid polypeptide reads, in one-letter code: Arginine--tRNA ligase (585 aa).

A 'HIGH' region motif is present at residues 131 to 141 (ANPTGPMHVGH).

The protein belongs to the class-I aminoacyl-tRNA synthetase family. In terms of assembly, monomer.

Its subcellular location is the cytoplasm. It catalyses the reaction tRNA(Arg) + L-arginine + ATP = L-arginyl-tRNA(Arg) + AMP + diphosphate. The chain is Arginine--tRNA ligase from Bartonella henselae (strain ATCC 49882 / DSM 28221 / CCUG 30454 / Houston 1) (Rochalimaea henselae).